The following is a 62-amino-acid chain: Large ribosomal subunit protein uL29 (62 aa).

Belongs to the universal ribosomal protein uL29 family.

This is Large ribosomal subunit protein uL29 from Ruthia magnifica subsp. Calyptogena magnifica.